Consider the following 378-residue polypeptide: Homeobox protein Meis3 (378 aa).

The tract at residues 24–57 (FSEAAPSVPRAPGPYTPHRPPQLQAPGLDSDSLK) is disordered. The segment covering 32-43 (PRAPGPYTPHRP) has biased composition (pro residues). An MEIS N-terminal domain is found at 99–182 (GGDVCSSDSF…PIDLVIEDRD (84 aa)). Positions 203-265 (NTTWIRDHED…DEDLDLERRR (63 aa)) are disordered. Over residues 230–244 (SQSGDNSSDQGDGLD) the composition is skewed to low complexity. Residues 265–327 (RNKKRGIFPK…NARRRIVQPM (63 aa)) constitute a DNA-binding region (homeobox; TALE-type).

This sequence belongs to the TALE/MEIS homeobox family. Expressed at high levels in the brain. Significant expression also observed in the heart, spleen and lung. Expressed in pancreatic islets (beta-cells and non-beta-cells).

The protein localises to the nucleus. Transcriptional regulator which directly modulates PDPK1 expression, thus promoting survival of pancreatic beta-cells. Also regulates expression of NDFIP1, BNIP3, and CCNG1. This Mus musculus (Mouse) protein is Homeobox protein Meis3 (Meis3).